A 348-amino-acid polypeptide reads, in one-letter code: D-fructose 1,6-bisphosphatase class 2/sedoheptulose 1,7-bisphosphatase 2 (348 aa).

Residues D33, E57, D97, and E100 each contribute to the Mn(2+) site. Substrate contacts are provided by residues 100–102, Y131, 176–178, and 198–200; these read EGT, RER, and DGD. E225 is a Mn(2+) binding site.

The protein belongs to the FBPase class 2 family. In terms of assembly, homotetramer.

The catalysed reaction is beta-D-fructose 1,6-bisphosphate + H2O = beta-D-fructose 6-phosphate + phosphate. The enzyme catalyses D-sedoheptulose 1,7-bisphosphate + H2O = D-sedoheptulose 7-phosphate + phosphate. It participates in carbohydrate biosynthesis; Calvin cycle. Catalyzes the hydrolysis of fructose 1,6-bisphosphate (Fru 1,6-P2) and sedoheptulose 1,7-bisphosphate (Sed 1,7-P2) to fructose 6-phosphate and sedoheptulose 7-phosphate, respectively. The protein is D-fructose 1,6-bisphosphatase class 2/sedoheptulose 1,7-bisphosphatase 2 of Acaryochloris marina (strain MBIC 11017).